The primary structure comprises 142 residues: Acidic phospholipase A2 Bc-PL (142 aa).

The signal sequence occupies residues 1–9 (AVCVSLLGA). The propeptide occupies 10-17 (ANIPPQPL). Intrachain disulfides connect C28–C94, C44–C141, C46–C62, C61–C122, C68–C115, C78–C108, and C101–C113. The Ca(2+) site is built by Y45, G47, and G49. Residue H65 is part of the active site. D66 serves as a coordination point for Ca(2+). D116 is an active-site residue.

It belongs to the phospholipase A2 family. Group I subfamily. D49 sub-subfamily. Ca(2+) is required as a cofactor. As to expression, expressed by the venom gland.

It localises to the secreted. The catalysed reaction is a 1,2-diacyl-sn-glycero-3-phosphocholine + H2O = a 1-acyl-sn-glycero-3-phosphocholine + a fatty acid + H(+). Its function is as follows. PLA2 catalyzes the calcium-dependent hydrolysis of the 2-acyl groups in 3-sn-phosphoglycerides. The sequence is that of Acidic phospholipase A2 Bc-PL from Bungarus candidus (Malayan krait).